The sequence spans 136 residues: Calcitonin (136 aa).

Positions 1-25 (MGFLKFSPFLVVSILLLYQACGLQA) are cleaved as a signal peptide. Positions 26 to 82 (VPLRSTLESSPGMATLSEEEARLLAALVQNYMQMKVRELEQEEEQEAEGSSLDSPRS) are excised as a propeptide. Serine 42 bears the Phosphoserine mark. The segment at 64–84 (LEQEEEQEAEGSSLDSPRSKR) is disordered. Cysteine 85 and cysteine 91 are oxidised to a cystine. A glycan (N-linked (GlcNAc...) asparagine) is linked at asparagine 87. A disordered region spans residues 114-136 (GAPGKKRDMAKDLETNHHPYFGN). Proline 116 bears the Proline amide mark. Over residues 118-130 (KKRDMAKDLETNH) the composition is skewed to basic and acidic residues. The propeptide occupies 121–136 (DMAKDLETNHHPYFGN).

This sequence belongs to the calcitonin family.

It is found in the secreted. Its function is as follows. Calcitonin is a peptide hormone that causes a rapid but short-lived drop in the level of calcium and phosphate in blood by promoting the incorporation of those ions in the bones. Calcitonin function is mediated by the calcitonin receptor/CALCR and the CALCR-RAMP2 (AMYR2) receptor complex. The protein is Calcitonin of Rattus norvegicus (Rat).